A 483-amino-acid chain; its full sequence is Phloretin 2'-O-glucosyltransferase (483 aa).

The Proton acceptor role is filled by His15. Residue His15 participates in an anthocyanidin binding. Asp118 (charge relay) is an active-site residue. Residues Thr140, Ala360, Gln362, His377, Trp380, Asn381, Ser382, and Glu385 each contribute to the UDP-alpha-D-glucose site. Ala400 is a binding site for an anthocyanidin. Residues Glu401 and Gln402 each coordinate UDP-alpha-D-glucose.

Belongs to the UDP-glycosyltransferase family. In terms of tissue distribution, highly expressed in roots and at lower levels in leaves, flowers and fruits.

The catalysed reaction is phloretin + UDP-alpha-D-glucose = phlorizin + UDP + H(+). In terms of biological role, glycosyltransferase that possesses phloretin 2'-O-glycosyltransferase activity. Converts phloretin to phlorizin (phloretin 2'-O-glucoside), a potent antioxidant. Is specific for phloretin and does not possess glycosyltransferase activity toward caffeic acid, catechin, chlorogenic acid, 2-coumaric acid, 3-coumaric acid, 4-coumaric acid, cyanidin, 3,4-dihydroxyhydrocinnamic acid, epicatechin, 3-hydroxybenzoic acid, naringenin, 3,4-dihydroxybenzoic acid, quercetin and rutin. Can glycosylate phloretin in the presence of UDP-glucose, UDP-xylose and UDP-galactose. The protein is Phloretin 2'-O-glucosyltransferase of Malus domestica (Apple).